Consider the following 292-residue polypeptide: MDAETECCKCHLLDLPWEDVLVTHIFCYLPLRQLVRLQRVSKQFYALIQVYLANCRTFDLTQIGPSLPKEAFCNILRDNKVLQNLSVQNCSDWVTDTELLPVIGQNQHLLRVDMRGCDRLTRHSLVAVSLSCTHLQYLGLAHCEWVDSLSIRSLADHCGGLRSIDLTACRQLKDEAICYLSKKCLKMRSLSVAVNANITDVSVEEVAKNCRELEQLDLTGCLRVRNDSIRTVAEYCPKLQSLKVNHCHNVTESSLDPLRKRNVEIDVEPPLQRALVLLQDVVGFAPFINLQI.

One can recognise an F-box domain in the interval 12–59 (LLDLPWEDVLVTHIFCYLPLRQLVRLQRVSKQFYALIQVYLANCRTFD). LRR repeat units follow at residues 134 to 155 (HLQY…RSLA), 160 to 181 (GLRS…CYLS), 186 to 207 (KMRS…EEVA), 212 to 233 (ELEQ…RTVA), and 238 to 259 (KLQS…DPLR).

This sequence belongs to the FBXL15 family. As to quaternary structure, part of the SCF (SKP1-CUL1-F-box) E3 ubiquitin-protein ligase complex SCF(FBXL15).

It localises to the cytoplasm. The protein operates within protein modification; protein ubiquitination. Its function is as follows. Substrate recognition component of a SCF (SKP1-CUL1-F-box protein) E3 ubiquitin-protein ligase complex which mediates the ubiquitination and subsequent proteasomal degradation of target proteins. Acts as a positive regulator of the BMP signaling pathway. Required for dorsal/ventral pattern formation. In Salmo salar (Atlantic salmon), this protein is F-box/LRR-repeat protein 15 (fbxl15).